Consider the following 165-residue polypeptide: MAKTHFQGNETATSGELPQVGDNLAEFNLVNTELGEVSSKDFQGRKLVLNIFPSVDTGVCATSVRKFNEAAASLENTTVLCISKDLPFALGRFCSAEGIENVTPVSAFRSTFGEDNGIVLEGSPLKGLLARSVIVVDENGKVAYTQLVDEISTEPDYDAALAALN.

Residues 18 to 165 enclose the Thioredoxin domain; the sequence is PQVGDNLAEF…DYDAALAALN (148 aa). The active-site Cysteine sulfenic acid (-SOH) intermediate is cysteine 60. Cysteine 60 and cysteine 94 are joined by a disulfide.

Belongs to the peroxiredoxin family. Tpx subfamily. As to quaternary structure, homodimer.

It catalyses the reaction a hydroperoxide + [thioredoxin]-dithiol = an alcohol + [thioredoxin]-disulfide + H2O. Its function is as follows. Thiol-specific peroxidase that catalyzes the reduction of hydrogen peroxide and organic hydroperoxides to water and alcohols, respectively. Plays a role in cell protection against oxidative stress by detoxifying peroxides. This Corynebacterium glutamicum (strain ATCC 13032 / DSM 20300 / JCM 1318 / BCRC 11384 / CCUG 27702 / LMG 3730 / NBRC 12168 / NCIMB 10025 / NRRL B-2784 / 534) protein is Thiol peroxidase.